A 263-amino-acid chain; its full sequence is MKNAFKDALKAGRPQIGLWLGLANSYSAELLAGAGFDWLLIDGEHAPNNVQTVLTQLQAIAPYPSQPVVRPSWNDPVQIKQLLDVGAQTLLIPMVQNADEARNAVAATRYPPAGIRGVGSALARASRWNRIPDYLHLANDAMCVLVQIETREAMSNLASILDVDGIDGVFIGPADLSADMGFAGNPQHPEVQAAIENAIVQIRAAGKAPGILMANEALAKRYLELGALFVAVGVDTTLLARGAEALAARFGAEKNLSGASGVY.

H45 (proton acceptor) is an active-site residue. Q147 is a binding site for substrate. Residue E149 participates in a divalent metal cation binding. The substrate site is built by A174 and D175. Residue D175 participates in a divalent metal cation binding.

Belongs to the HpcH/HpaI aldolase family. Homohexamer; trimer of dimers. A divalent metal cation is required as a cofactor.

It catalyses the reaction 4-hydroxy-2-oxoheptanedioate = succinate semialdehyde + pyruvate. It functions in the pathway aromatic compound metabolism; 4-hydroxyphenylacetate degradation; pyruvate and succinate semialdehyde from 4-hydroxyphenylacetate: step 7/7. Functionally, catalyzes the reversible retro-aldol cleavage of 4-hydroxy-2-ketoheptane-1,7-dioate (HKHD) to pyruvate and succinic semialdehyde. This Salmonella paratyphi A (strain ATCC 9150 / SARB42) protein is 4-hydroxy-2-oxo-heptane-1,7-dioate aldolase.